The chain runs to 472 residues: Trigger factor (472 aa).

In terms of domain architecture, PPIase FKBP-type spans 174 to 261 (GDIAVLGFKG…LKDLKTRELP (88 aa)). The disordered stretch occupies residues 430–472 (ENSTLTEQAPAADDADDAEKPAAKKKPAAKKKTPAKSKTDAEA). Over residues 452–464 (AKKKPAAKKKTPA) the composition is skewed to basic residues.

It belongs to the FKBP-type PPIase family. Tig subfamily.

Its subcellular location is the cytoplasm. The catalysed reaction is [protein]-peptidylproline (omega=180) = [protein]-peptidylproline (omega=0). Functionally, involved in protein export. Acts as a chaperone by maintaining the newly synthesized protein in an open conformation. Functions as a peptidyl-prolyl cis-trans isomerase. This is Trigger factor from Parasynechococcus marenigrum (strain WH8102).